Here is a 223-residue protein sequence, read N- to C-terminus: MTIAKMIDHTALKPDTTKEQILTLTKEAREYGFASVCVNPTWVKLSAEQLAGAESVVCTVIGFPLGANTPEVKAFEVKDAIQNGAKEVDMVINIGALKDKDDELVERDIRAVVDVAKGKALVKVIIETCLLTDEEKVRACEIAVKAGTDFVKTSTGFSTGGATAEDIALMRKTVGPNIGVKASGGVRTKEDVEKMIEAGATRIGASAGVAIVSGEKPAKPDNY.

The active-site Proton donor/acceptor is Asp-89. Residue Lys-152 is the Schiff-base intermediate with acetaldehyde of the active site. Catalysis depends on Lys-181, which acts as the Proton donor/acceptor.

This sequence belongs to the DeoC/FbaB aldolase family. DeoC type 1 subfamily.

Its subcellular location is the cytoplasm. It catalyses the reaction 2-deoxy-D-ribose 5-phosphate = D-glyceraldehyde 3-phosphate + acetaldehyde. It functions in the pathway carbohydrate degradation; 2-deoxy-D-ribose 1-phosphate degradation; D-glyceraldehyde 3-phosphate and acetaldehyde from 2-deoxy-alpha-D-ribose 1-phosphate: step 2/2. Functionally, catalyzes a reversible aldol reaction between acetaldehyde and D-glyceraldehyde 3-phosphate to generate 2-deoxy-D-ribose 5-phosphate. This chain is Deoxyribose-phosphate aldolase, found in Listeria monocytogenes serovar 1/2a (strain ATCC BAA-679 / EGD-e).